The chain runs to 459 residues: MAKVWSKRFDNALDPFIEKFNASIGFDKKLILEDLDCSIAHAKMLGKTKVLSPSETLQIINGLESIKVEYLEGKFSPSLPSEDIHYCIEHKLISLIGETGKKLHTGRSRNDQVGTDIRLWLRKEIDNIEILIADLQKSFLNLAKANIYTLIPGYTHMQRAQPLSLAHHLLAYIEMLQRDRERFKEVRGRVNISPLGAAALAGTKIKIDRHFTAAELGFEKIYKNSIDAVSDRDFCIEFVSTSALLMSHLSKISEEIILWVTDEFSFAKLTDKCATGSSLMPQKKNPDVPELIRGKTGRVYGHLQALLTMVKGVPLSYNKDFQEDKEPIFDTAETISSCITAMTILLNEGIEFNIQNLSDSVENDFSNATDLADYLVSKDVPFRTAYQVVGEIVKYCLKRKMLFKNLKIDEFKKFHPEFDEDVFVDLKPFNVVKSRNSEGGTGFAQVEKEVKNWQKKLSI.

Belongs to the lyase 1 family. Argininosuccinate lyase subfamily.

It is found in the cytoplasm. It catalyses the reaction 2-(N(omega)-L-arginino)succinate = fumarate + L-arginine. It functions in the pathway amino-acid biosynthesis; L-arginine biosynthesis; L-arginine from L-ornithine and carbamoyl phosphate: step 3/3. The protein is Argininosuccinate lyase of Prochlorococcus marinus (strain MIT 9301).